The chain runs to 109 residues: Staphostatin B (109 aa).

The segment at 97 to 101 is binds to staphopain B; that stretch reads IGTSR.

This sequence belongs to the protease inhibitor I57 (SspC) family. As to quaternary structure, forms a stable non-covalent complex with prematurely activated/folded SspB.

Its subcellular location is the cytoplasm. Its function is as follows. Specifically inhibits the cysteine protease staphopain B (SspB) by blocking the active site of the enzyme. Probably required to protect cytoplasmic proteins from being degraded by prematurely activated/folded prostaphopain B. Also involved in growth capacity, viability and bacterial morphology. The chain is Staphostatin B (sspC) from Staphylococcus aureus (strain Mu50 / ATCC 700699).